A 450-amino-acid polypeptide reads, in one-letter code: Folate synthesis bifunctional protein (450 aa).

The segment at 1-166 is HPPK; it reads MTSWNFVCLS…TFAELAAIYP (166 aa). The region spanning 180–441 is the Pterin-binding domain; that stretch reads TQIMGIVNIT…QVEGNRRALA (262 aa). Positions 182-450 are DHPS; that stretch reads IMGIVNITDN…AAAAWAGMFV (269 aa). Asn-187 is a binding site for Mg(2+). (7,8-dihydropterin-6-yl)methyl diphosphate-binding positions include Thr-227, Asp-267, Asn-287, Asp-358, Lys-395, and 429–431; that span reads RVH.

This sequence in the C-terminal section; belongs to the DHPS family. It in the N-terminal section; belongs to the HPPK family. Mg(2+) serves as cofactor.

It catalyses the reaction 6-hydroxymethyl-7,8-dihydropterin + ATP = (7,8-dihydropterin-6-yl)methyl diphosphate + AMP + H(+). The enzyme catalyses (7,8-dihydropterin-6-yl)methyl diphosphate + 4-aminobenzoate = 7,8-dihydropteroate + diphosphate. It participates in cofactor biosynthesis; tetrahydrofolate biosynthesis; 2-amino-4-hydroxy-6-hydroxymethyl-7,8-dihydropteridine diphosphate from 7,8-dihydroneopterin triphosphate: step 4/4. It functions in the pathway cofactor biosynthesis; tetrahydrofolate biosynthesis; 7,8-dihydrofolate from 2-amino-4-hydroxy-6-hydroxymethyl-7,8-dihydropteridine diphosphate and 4-aminobenzoate: step 1/2. The polypeptide is Folate synthesis bifunctional protein (folKP) (Chlamydia trachomatis serovar D (strain ATCC VR-885 / DSM 19411 / UW-3/Cx)).